The sequence spans 21 residues: M-lycotoxin-Ls4a (21 aa).

Residue leucine 21 is modified to Leucine amide.

In terms of tissue distribution, expressed by the venom gland.

It is found in the secreted. May inhibit growth of bacteria. This chain is M-lycotoxin-Ls4a, found in Lycosa singoriensis (Wolf spider).